Here is a 202-residue protein sequence, read N- to C-terminus: Potassium-transporting ATPase KdpC subunit (202 aa).

A helical membrane pass occupies residues 7–27 (PAIFVLLALTLITGLLYPLAM). The segment at 66-103 (FHGRPSATSTADPNDSTKTVPAPYNAANSSGSNLGPTS) is disordered. Composition is skewed to polar residues over residues 71 to 84 (SATS…STKT) and 91 to 101 (AANSSGSNLGP).

Belongs to the KdpC family. As to quaternary structure, the system is composed of three essential subunits: KdpA, KdpB and KdpC.

It is found in the cell inner membrane. Its function is as follows. Part of the high-affinity ATP-driven potassium transport (or Kdp) system, which catalyzes the hydrolysis of ATP coupled with the electrogenic transport of potassium into the cytoplasm. This subunit acts as a catalytic chaperone that increases the ATP-binding affinity of the ATP-hydrolyzing subunit KdpB by the formation of a transient KdpB/KdpC/ATP ternary complex. The polypeptide is Potassium-transporting ATPase KdpC subunit (Bradyrhizobium sp. (strain ORS 278)).